The chain runs to 149 residues: Large ribosomal subunit protein bL9 (149 aa).

Belongs to the bacterial ribosomal protein bL9 family.

Functionally, binds to the 23S rRNA. The chain is Large ribosomal subunit protein bL9 from Clostridioides difficile (strain 630) (Peptoclostridium difficile).